A 253-amino-acid polypeptide reads, in one-letter code: Ubiquinone/menaquinone biosynthesis C-methyltransferase UbiE (253 aa).

S-adenosyl-L-methionine-binding positions include Thr-76, Asp-97, 125 to 126 (NA), and Ser-142.

It belongs to the class I-like SAM-binding methyltransferase superfamily. MenG/UbiE family.

It carries out the reaction a 2-demethylmenaquinol + S-adenosyl-L-methionine = a menaquinol + S-adenosyl-L-homocysteine + H(+). It catalyses the reaction a 2-methoxy-6-(all-trans-polyprenyl)benzene-1,4-diol + S-adenosyl-L-methionine = a 5-methoxy-2-methyl-3-(all-trans-polyprenyl)benzene-1,4-diol + S-adenosyl-L-homocysteine + H(+). It participates in quinol/quinone metabolism; menaquinone biosynthesis; menaquinol from 1,4-dihydroxy-2-naphthoate: step 2/2. It functions in the pathway cofactor biosynthesis; ubiquinone biosynthesis. In terms of biological role, methyltransferase required for the conversion of demethylmenaquinol (DMKH2) to menaquinol (MKH2) and the conversion of 2-polyprenyl-6-methoxy-1,4-benzoquinol (DDMQH2) to 2-polyprenyl-3-methyl-6-methoxy-1,4-benzoquinol (DMQH2). This chain is Ubiquinone/menaquinone biosynthesis C-methyltransferase UbiE, found in Xylella fastidiosa (strain M12).